The following is a 199-amino-acid chain: dITP/XTP pyrophosphatase (199 aa).

T9–K14 contacts substrate. Mg(2+) is bound by residues E41 and D70. The active-site Proton acceptor is D70. Residues S71, F157–D160, K180, and H185–R186 contribute to the substrate site.

This sequence belongs to the HAM1 NTPase family. As to quaternary structure, homodimer. Mg(2+) is required as a cofactor.

The catalysed reaction is XTP + H2O = XMP + diphosphate + H(+). It catalyses the reaction dITP + H2O = dIMP + diphosphate + H(+). The enzyme catalyses ITP + H2O = IMP + diphosphate + H(+). In terms of biological role, pyrophosphatase that catalyzes the hydrolysis of nucleoside triphosphates to their monophosphate derivatives, with a high preference for the non-canonical purine nucleotides XTP (xanthosine triphosphate), dITP (deoxyinosine triphosphate) and ITP. Seems to function as a house-cleaning enzyme that removes non-canonical purine nucleotides from the nucleotide pool, thus preventing their incorporation into DNA/RNA and avoiding chromosomal lesions. The sequence is that of dITP/XTP pyrophosphatase from Mannheimia succiniciproducens (strain KCTC 0769BP / MBEL55E).